The following is a 291-amino-acid chain: Filament protein FIN1 (291 aa).

Ser-54 is modified (phosphoserine). Thr-68 carries the phosphothreonine modification. Ser-74 and Ser-88 each carry phosphoserine. Positions 254-284 (VELKEIKDLLLQMLRRQREIESRLSNIELQL) form a coiled coil.

As to quaternary structure, homooligomer; in vitro, FIN1 self-assembles into 10 nm diameter filaments. Interacts with the 14-3-3 proteins BMH1 and BMH2, and the protein phosphatase 1 complex catalytic subunit GLC7. Post-translationally, phosphorylated by CDC28. Phosphorylation is required for BMH1 and BMH2 interaction. Dephosphorylation by GLC7 depends on the presence of BMH1 and BMH2.

It is found in the nucleus. Its subcellular location is the cytoplasm. The protein resides in the cytoskeleton. It localises to the spindle pole. Forms cell-cycle specific filaments between the spindle pole bodies of dividing yeast cells. This Saccharomyces cerevisiae (strain ATCC 204508 / S288c) (Baker's yeast) protein is Filament protein FIN1 (FIN1).